Reading from the N-terminus, the 152-residue chain is 6,7-dimethyl-8-ribityllumazine synthase (152 aa).

Residues Phe24, 56-58, and 80-82 each bind 5-amino-6-(D-ribitylamino)uracil; these read SFE and VVV. Residue 85–86 participates in (2S)-2-hydroxy-3-oxobutyl phosphate binding; sequence ET. His88 functions as the Proton donor in the catalytic mechanism. Phe113 provides a ligand contact to 5-amino-6-(D-ribitylamino)uracil. Residue Arg127 coordinates (2S)-2-hydroxy-3-oxobutyl phosphate.

This sequence belongs to the DMRL synthase family.

The catalysed reaction is (2S)-2-hydroxy-3-oxobutyl phosphate + 5-amino-6-(D-ribitylamino)uracil = 6,7-dimethyl-8-(1-D-ribityl)lumazine + phosphate + 2 H2O + H(+). It participates in cofactor biosynthesis; riboflavin biosynthesis; riboflavin from 2-hydroxy-3-oxobutyl phosphate and 5-amino-6-(D-ribitylamino)uracil: step 1/2. Catalyzes the formation of 6,7-dimethyl-8-ribityllumazine by condensation of 5-amino-6-(D-ribitylamino)uracil with 3,4-dihydroxy-2-butanone 4-phosphate. This is the penultimate step in the biosynthesis of riboflavin. This is 6,7-dimethyl-8-ribityllumazine synthase from Thermococcus onnurineus (strain NA1).